A 292-amino-acid chain; its full sequence is NIF3-like protein 1 (292 aa).

This sequence belongs to the GTP cyclohydrolase I type 2/NIF3 family.

This Drosophila melanogaster (Fruit fly) protein is NIF3-like protein 1 (anon-35F/36A).